The chain runs to 1742 residues: MRLLWGLLWAFGLFASSLQKPRLLLFSPSVVNLGVPLSVGVQLQDARQGEVVTGFVFLRNPSHNNDRCSPKKAFTLTSQQDFVHLSLQVPQSDAKSCGLFGLRRSPEVQLVAQSPWLRDVLAKETDTQGVNLLFASRRGHFFVQTDQPVYNPGQRVQYRVFALDQKMRPSKDSLLVTVENSRGLRVRKKEVRDPSSIFQDSFLIPDISEPGTWRISAQFSDSLEANSSTKFEVKKYVLPNFEVKITPRKPYILVTSNHLGEIQVDIEARYIYGKPVQGVAYVRFGLLDEDGTKNFLRGLETQLKLKDGKSHVSLSRVELEGALQKLRLSVPDLQGLRLYTSAAVIESPGGEIEEAELTSWHFVPSAFSLDLSNTKRHLVPGAPFLLQALVREASGPPAPDVPVKVSVTLSGSVPKVPEIVQNTDRMGQVNMAINIPWGTTRLQLLVSAGSLYPAVARLEVRAPPSGSSGFLSIERPDPRAPRVQETVTLNLRSVGLSRATFPYYYYMVLSRGEIVSVGRERRQELTSVSVFVDHHLAPAFYFVAFYYHKGQPVANSLRVDVEAGACEGKLELRLDGTKDYRNGDSAKLQLLTDSEALVALGAVDTALYAVGSRTHKPLDMAKVFEVMNSYNLGCGPGGGDSAPQVFRAVGLAFSDGDLWTPVRETLSCPKEEKARKKRSVDFQKAVSEKLGQFASPEAKRCCQDGLTRLPMVRSCEQRAARVLQPACREPFLSCCQFAESLRKKSRAESPGGLGRAMEVLQEEELLEEDMILVRSFFPENWLWRVLRVDRSETLTVWLPDSMTTWEIHGVSLSQSKGLCVATPARLRVFREFHLHVRLPASIRRFEQLELRPVLYNYLEENLTMSVHIAPVEGLCLAGGGGLAQQVHVPAGSARPVPFFVVPTAATAVSLKVVARGTTLVGDAVSKVLQIEKEGAIHQEELVYELNPLDHRARTLEIPGNSDPNMIPEGESSSFVRVTASNPLETLGSEGALSPGGIASHLRLPTGCGEQTMTLLAPTLAASRYLDRTEQWSKLPPETKDRAVDLIQKGYMRIQEYRKSDGSYAAWLSRESSTWLTAFVLKVLSLAQDQVGGSPEKLQETASWLLGMQQADGSFHDPCPVIHRDMQGGLVGSDETVALTAFVVIALQHGLNAFQDQSAEALKQRVKASILKADSYLGGKASAGLLGAHAAAITAYALTLTKAPQDLQDVAHNNLMVMAQEIGDNRYWGSVTTSQSNVVSPTLAPLSPTDPMPQAPALWIETTAYGLLHLLLREGKAELADQVANWLMHQASFHGGFRSTQDTVMAMDALSAYWIASHTTENKELNVTLSAMGRRGFKSHILQLDSRQVQGLEEELQFSLSSKISVKVGGNSKGTLKVLRTYHVLDMTNTTCQDLRIEVTVMGYVEYTRQANADYEEDYEYDEFLAGDDPGAPLRPVMPLQLFEGRRNRRRREAPKVAEEQEPRVQYTVCIWREGKMRLSGMAIADITLLSGFSALSADLEKLTSLSDRYVSHFETQGPHVLLYFDSVPTSRECVGFGAMQEVAVGLVQPASAVVYDYYSPERRCSVFYGAPEKSKLLSTLCSGDVCQCAEGKCPRQRRALERGLQDEDRYRMKFACYHPRVEYGFQVRVLREDSRAAFRLFETKIIQVLHFTKDAKAAADQTRNFLVRDSCRLHLEPGREYLIMGLDGITSDLKGDPQYLLDSKSWIEEMPSERLCRSTRQRAACAQLNDFIQEYSTLGCQV.

An N-terminal signal peptide occupies residues 1-19; sequence MRLLWGLLWAFGLFASSLQ. An N-linked (GlcNAc...) asparagine glycan is attached at Asn60. A disulfide bond links Cys68 and Cys97. The N-linked (GlcNAc...) asparagine glycan is linked to Asn226. Cys634 and Cys668 form a disulfide bridge. The propeptide occupies 675–678; it reads RKKR. 3 disulfides stabilise this stretch: Cys701-Cys727, Cys702-Cys734, and Cys715-Cys735. Residues 701–735 enclose the Anaphylatoxin-like domain; sequence CCQDGLTRLPMVRSCEQRAARVLQPACREPFLSCC. An N-linked (GlcNAc...) asparagine glycan is attached at Asn861. The isoglutamyl cysteine thioester (Cys-Gln) cross-link spans 1007 to 1010; it reads CGEQ. Residues Asn1325 and Asn1388 are each glycosylated (N-linked (GlcNAc...) asparagine). 3 positions are modified to sulfotyrosine: Tyr1414, Tyr1418, and Tyr1420. The propeptide occupies 1445–1451; it reads RRNRRRR. Intrachain disulfides connect Cys1469-Cys1533, Cys1581-Cys1586, Cys1593-Cys1671, Cys1616-Cys1740, and Cys1716-Cys1725. The NTR domain occupies 1593-1740; it reads CPRQRRALER…FIQEYSTLGC (148 aa).

As to quaternary structure, in absence of complement activation, circulates in blood as a disulfide-linked trimer of an alpha, beta and gamma chain. Complement C4b is composed of complement C4b-A, complement C4 beta and complement C4 gamma chains that are associated via disulfide bonds. Non-enzymatic component of the C3 convertase, also named C4bC2b, composed of the serine protease complement C2b (C2), as well as complement C4b. Non-enzymatic component of the C5 convertase, also named C4bC2bC3b, composed of the serine protease complement C2b (C2), complement C3b, as well as complement C4b. Prior to secretion, the single-chain precursor is enzymatically cleaved by plasminogen (PLG) to yield non-identical chains alpha, beta and gamma. During activation of the complement systems, the alpha chain is cleaved into C4a and C4b by different proteases depending on the complement pathway: C4b stays linked to the beta and gamma chains, while C4a is released in the plasma. The alpha chain is cleaved by C1S to generate C4a and C4b following activation by the classical complement system. The alpha chain is cleaved to generate C4a and C4b by MASP2 following activation by the lectin complement system. The alpha chain is cleaved by GZMK to generate C4a and C4b following activation by the GZMK complement system. Further degradation of C4b by C1 into the inactive fragments C4c and C4d blocks the generation of C3 convertase. The proteolytic cleavages often are incomplete so that many structural forms can be found in plasma. Post-translationally, upon activation, the internal thioester bond reacts with carbohydrate antigens on the target surface to form amide or ester bonds, leading to covalent association with the surface of pathogens. In terms of processing, complement C4b interacts with complement C3b via a thioester linkage. N- and O-glycosylated. O-glycosylated with a core 1 or possibly core 8 glycan.

It is found in the secreted. The protein localises to the cell surface. Functionally, precursor of non-enzymatic components of the classical, lectin and GZMK complement pathways, which consist in a cascade of proteins that leads to phagocytosis and breakdown of pathogens and signaling that strengthens the adaptive immune system. Its function is as follows. Non-enzymatic component of C3 and C5 convertases. Generated following cleavage by complement proteases (C1S, MASP2 or GZMK, depending on the complement pathway), it covalently attaches to the surface of pathogens, where it acts as an opsonin that marks the surface of antigens for removal. It then recruits the serine protease complement C2b to form the C3 and C5 convertases, which cleave and activate C3 and C5, respectively, the next components of the complement pathways. Complement C4b-A isotype is responsible for effective binding to form amide bonds with immune aggregates or protein antigens, while complement C4b-B isotype catalyzes the transacylation of the thioester carbonyl group to form ester bonds with carbohydrate antigens. Putative humoral mediator released following cleavage by complement proteases (C1S, MASP2 or GZMK, depending on the complement pathway). While it is strongly similar to anaphylatoxins, its role is unclear. Was reported to act as a mediator of local inflammatory process; however these effects were probably due to contamination with C3a and/C5a anaphylatoxins in biological assays. In Cavia porcellus (Guinea pig), this protein is Complement C4.